Reading from the N-terminus, the 341-residue chain is Phosphate acyltransferase (341 aa).

This sequence belongs to the PlsX family. Homodimer. Probably interacts with PlsY.

Its subcellular location is the cytoplasm. The enzyme catalyses a fatty acyl-[ACP] + phosphate = an acyl phosphate + holo-[ACP]. Its pathway is lipid metabolism; phospholipid metabolism. Catalyzes the reversible formation of acyl-phosphate (acyl-PO(4)) from acyl-[acyl-carrier-protein] (acyl-ACP). This enzyme utilizes acyl-ACP as fatty acyl donor, but not acyl-CoA. In Elusimicrobium minutum (strain Pei191), this protein is Phosphate acyltransferase.